The primary structure comprises 56 residues: Small ribosomal subunit protein uS14 (56 aa).

Cys-21, Cys-24, Cys-39, and Cys-42 together coordinate Zn(2+).

It belongs to the universal ribosomal protein uS14 family. The cofactor is Zn(2+).

This chain is Small ribosomal subunit protein uS14 (rps29A), found in Guillardia theta (Cryptophyte).